Consider the following 394-residue polypeptide: Metallophosphoesterase 1 (394 aa).

A helical transmembrane segment spans residues 27-47; that stretch reads TVVVISVLLFCEYFIYYLVLF. Asp74, Asp116, Asn154, His247, His301, and His303 together coordinate a divalent metal cation. Residues 354 to 374 traverse the membrane as a helical segment; that stretch reads TVLTTYCAAAAFLLVLILAHF.

It belongs to the metallophosphoesterase superfamily. MPPE1 family. In terms of assembly, interacts with GPI-anchor proteins (via the GPI portion). Interacts with TMED10. Mn(2+) serves as cofactor.

The protein localises to the endoplasmic reticulum-Golgi intermediate compartment membrane. Metallophosphoesterase that catalyzes the removal of a side-chain ethanolamine-phosphate (EtNP) from the second mannose of the GPI-anchor protein intermediate. Participates in the glycan remodeling steps of GPI-anchor maturation to allow an efficient transport of GPI-anchor proteins from the endoplasmic reticulum to the Golgi. This is Metallophosphoesterase 1 from Rattus norvegicus (Rat).